The sequence spans 35 residues: Turripeptide gsp9a (35 aa).

4-hydroxyproline occurs at positions 3 and 4. 3 cysteine pairs are disulfide-bonded: C7/C22, C12/C26, and C18/C33. 2 positions are modified to 4-carboxyglutamate: E14 and E17.

As to expression, expressed by the venom duct.

The protein resides in the secreted. The protein is Turripeptide gsp9a of Gemmula speciosa (Splendid gem-turris).